A 439-amino-acid chain; its full sequence is 3-phosphoshikimate 1-carboxyvinyltransferase (439 aa).

3-phosphoshikimate contacts are provided by lysine 27, serine 28, and arginine 32. Residue lysine 27 participates in phosphoenolpyruvate binding. Residues glycine 101 and arginine 130 each contribute to the phosphoenolpyruvate site. Serine 175, glutamine 177, aspartate 326, and lysine 353 together coordinate 3-phosphoshikimate. Residue glutamine 177 coordinates phosphoenolpyruvate. The Proton acceptor role is filled by aspartate 326. Arginine 357 and arginine 399 together coordinate phosphoenolpyruvate.

Belongs to the EPSP synthase family. In terms of assembly, monomer.

The protein localises to the cytoplasm. The catalysed reaction is 3-phosphoshikimate + phosphoenolpyruvate = 5-O-(1-carboxyvinyl)-3-phosphoshikimate + phosphate. It functions in the pathway metabolic intermediate biosynthesis; chorismate biosynthesis; chorismate from D-erythrose 4-phosphate and phosphoenolpyruvate: step 6/7. Functionally, catalyzes the transfer of the enolpyruvyl moiety of phosphoenolpyruvate (PEP) to the 5-hydroxyl of shikimate-3-phosphate (S3P) to produce enolpyruvyl shikimate-3-phosphate and inorganic phosphate. In Synechococcus sp. (strain WH7803), this protein is 3-phosphoshikimate 1-carboxyvinyltransferase.